A 248-amino-acid polypeptide reads, in one-letter code: Ribosomal RNA small subunit methyltransferase J (248 aa).

S-adenosyl-L-methionine is bound by residues 101-102 (RD), 117-118 (ER), 153-154 (SS), and D171.

This sequence belongs to the methyltransferase superfamily. RsmJ family.

The protein localises to the cytoplasm. It catalyses the reaction guanosine(1516) in 16S rRNA + S-adenosyl-L-methionine = N(2)-methylguanosine(1516) in 16S rRNA + S-adenosyl-L-homocysteine + H(+). In terms of biological role, specifically methylates the guanosine in position 1516 of 16S rRNA. The chain is Ribosomal RNA small subunit methyltransferase J from Pectobacterium atrosepticum (strain SCRI 1043 / ATCC BAA-672) (Erwinia carotovora subsp. atroseptica).